Here is a 98-residue protein sequence, read N- to C-terminus: Defensin-A (98 aa).

An N-terminal signal peptide occupies residues 1-18 (MKSITVICFLALCTVAIT). The propeptide occupies 19 to 58 (SAYPQEPVLADEARPFANSLFDELPEETYQAAVENFRLKR). Intrachain disulfides connect Cys61/Cys88, Cys74/Cys94, and Cys78/Cys96.

It belongs to the invertebrate defensin family. Type 1 subfamily.

Its subcellular location is the secreted. Antibacterial peptide mostly active against Gram-positive bacteria. Has activity against the bacteria Gram-negative E.cloacae beta12. The sequence is that of Defensin-A (DEFA) from Aedes aegypti (Yellowfever mosquito).